The following is an 803-amino-acid chain: Ubiquitin carboxyl-terminal hydrolase 45 (803 aa).

The disordered stretch occupies residues 1 to 34; the sequence is MRLKDPFSLKTADMTKRSNKPKKPRDEDSSDEVG. A UBP-type zinc finger spans residues 36-153; it reads LTCQHVSRAV…QTLDFLQKQS (118 aa). 12 residues coordinate Zn(2+): Cys-38, His-40, Cys-62, Cys-65, Cys-85, Cys-88, Cys-93, His-100, His-104, His-113, Cys-126, and Cys-129. A USP domain is found at 192-802; that stretch reads KGINNLGNTC…QAYLLFYEEL (611 aa). Cys-201 acts as the Nucleophile in catalysis. A disordered region spans residues 394–554; sequence PTNPARLGKS…LPSIRPQQGG (161 aa). Residues 403–417 are compositionally biased toward basic and acidic residues; it reads SGREQDSLTSHDDSL. 2 stretches are compositionally biased toward polar residues: residues 419–440 and 469–480; these read AHSQ…SRHS and SYRTDTMGSQSD. Residues 502–531 are compositionally biased toward low complexity; that stretch reads SEWSPRIPSVSSHSSTSDKTSITTTLSTTT. Positions 532 to 545 are enriched in polar residues; the sequence is HNPSLKSNPSSTPL. His-739 (proton acceptor) is an active-site residue.

Belongs to the peptidase C19 family. Retina.

It localises to the photoreceptor inner segment. The protein resides in the cytoplasm. It is found in the nucleus. It catalyses the reaction Thiol-dependent hydrolysis of ester, thioester, amide, peptide and isopeptide bonds formed by the C-terminal Gly of ubiquitin (a 76-residue protein attached to proteins as an intracellular targeting signal).. Functionally, catalyzes the deubiquitination of SPDL1. Plays a role in the repair of UV-induced DNA damage via deubiquitination of ERCC1, promoting its recruitment to DNA damage sites. May be involved in the maintenance of photoreceptor function. May play a role in normal retinal development. The chain is Ubiquitin carboxyl-terminal hydrolase 45 from Danio rerio (Zebrafish).